The following is a 116-amino-acid chain: Peptidyl-tRNA hydrolase (116 aa).

It belongs to the PTH2 family.

The protein localises to the cytoplasm. It catalyses the reaction an N-acyl-L-alpha-aminoacyl-tRNA + H2O = an N-acyl-L-amino acid + a tRNA + H(+). Its function is as follows. The natural substrate for this enzyme may be peptidyl-tRNAs which drop off the ribosome during protein synthesis. This Methanococcus vannielii (strain ATCC 35089 / DSM 1224 / JCM 13029 / OCM 148 / SB) protein is Peptidyl-tRNA hydrolase.